The sequence spans 473 residues: 3-isopropylmalate dehydratase large subunit (473 aa).

Residues cysteine 351, cysteine 414, and cysteine 417 each coordinate [4Fe-4S] cluster.

Belongs to the aconitase/IPM isomerase family. LeuC type 1 subfamily. As to quaternary structure, heterodimer of LeuC and LeuD. [4Fe-4S] cluster serves as cofactor.

It carries out the reaction (2R,3S)-3-isopropylmalate = (2S)-2-isopropylmalate. It functions in the pathway amino-acid biosynthesis; L-leucine biosynthesis; L-leucine from 3-methyl-2-oxobutanoate: step 2/4. Functionally, catalyzes the isomerization between 2-isopropylmalate and 3-isopropylmalate, via the formation of 2-isopropylmaleate. This is 3-isopropylmalate dehydratase large subunit from Acidovorax sp. (strain JS42).